The primary structure comprises 332 residues: MKVTFEELKGAFYRVLRSRNIAEDTADACAEMFARTTESGVYSHGVNRFPRFIQQLDNGDIIPDAKPQRVTSLGAIEQWDAQRAIGNLTAKKMMDRAIELASDHGIGLVALRNANHWMRGGSYGWQAAEKGYIGICWTNSIAVMPPWGAKECRIGTNPLIVAIPSTPITMVDMSMSMFSYGMLEVNRLAGRELPVDGGFDDNGQLTKEPGVIEKNHRILPMGYWKGSGLSIVLDMIATLLSNGSSVAEVTQENSDEYGVSQIFIAIEVDKLIDGATRDAKLQRIMDFITTAERADDNVAIRLPGHEFTKLLDDSRCNGITIDDSVWAKIQAL.

His-44 (proton donor) is an active-site residue. NAD(+) is bound by residues 168-174 (ITMVDMS), 224-225 (WK), and 304-306 (GHE).

It belongs to the LDH2/MDH2 oxidoreductase family. DlgD subfamily. As to quaternary structure, homodimer.

The protein localises to the cytoplasm. It catalyses the reaction 3-dehydro-L-gulonate + NAD(+) = 2,3-dioxo-L-gulonate + NADH + H(+). The catalysed reaction is 3-dehydro-L-gulonate + NADP(+) = 2,3-dioxo-L-gulonate + NADPH + H(+). In terms of biological role, catalyzes the reduction of 2,3-diketo-L-gulonate in the presence of NADH, to form 3-keto-L-gulonate. The sequence is that of 2,3-diketo-L-gulonate reductase from Salmonella typhi.